We begin with the raw amino-acid sequence, 1633 residues long: Laminin-like protein lam-2 (1633 aa).

An N-terminal signal peptide occupies residues M1–P19. Residues Q47–R286 form the Laminin N-terminal domain. N116 and N136 each carry an N-linked (GlcNAc...) asparagine glycan. 16 disulfides stabilise this stretch: C287-C296, C289-C310, C312-C321, C324-C344, C347-C356, C349-C372, C375-C384, C387-C400, C403-C415, C405-C421, C423-C432, C435-C447, C450-C464, C452-C471, C473-C482, and C485-C500. Laminin EGF-like domains are found at residues C287 to A346, C347 to A402, C403 to N449, and C450 to P502. N-linked (GlcNAc...) asparagine glycosylation is present at N348. Residues C503–C512 enclose the Laminin EGF-like 5; first part domain. N-linked (GlcNAc...) asparagine glycosylation is found at N522, N658, and N740. The Laminin IV type A domain maps to Q529–H701. A Laminin EGF-like 5; second part domain is found at C702–A747. Disulfide bonds link C736/C745, C738/C752, C754/C763, C766/C782, C785/C803, C806/C815, C818/C832, C835/C849, C837/C856, C859/C868, C871/C887, C890/C909, C892/C916, C918/C927, C930/C943, C946/C958, C948/C965, C967/C976, C979/C991, C994/C1006, C996/C1013, C1015/C1024, and C1027/C1038. The 33-residue stretch at C752–K784 folds into the Laminin EGF-like 6; truncated domain. Laminin EGF-like domains follow at residues C785–E834, C835–S889, C890–E945, C946–P993, and C994–P1040. Residue N936 is glycosylated (N-linked (GlcNAc...) asparagine). Residues N1077, N1183, N1226, N1259, N1336, N1452, and N1528 are each glycosylated (N-linked (GlcNAc...) asparagine).

Functionally, during the formation of neuromuscular junctions at the larval stage, negatively regulates membrane protrusion from body wall muscles, probably downstream of the integrin complex formed by pat-2 and pat-3. The protein is Laminin-like protein lam-2 (lam-2) of Caenorhabditis elegans.